A 272-amino-acid chain; its full sequence is 3-methyl-2-oxobutanoate hydroxymethyltransferase (272 aa).

Mg(2+)-binding residues include D43 and D82. 3-methyl-2-oxobutanoate contacts are provided by residues 43 to 44, D82, and K112; that span reads DS. E114 provides a ligand contact to Mg(2+). E179 acts as the Proton acceptor in catalysis.

The protein belongs to the PanB family. In terms of assembly, homodecamer; pentamer of dimers. Requires Mg(2+) as cofactor.

It localises to the cytoplasm. It carries out the reaction 3-methyl-2-oxobutanoate + (6R)-5,10-methylene-5,6,7,8-tetrahydrofolate + H2O = 2-dehydropantoate + (6S)-5,6,7,8-tetrahydrofolate. It functions in the pathway cofactor biosynthesis; (R)-pantothenate biosynthesis; (R)-pantoate from 3-methyl-2-oxobutanoate: step 1/2. Its function is as follows. Catalyzes the reversible reaction in which hydroxymethyl group from 5,10-methylenetetrahydrofolate is transferred onto alpha-ketoisovalerate to form ketopantoate. This chain is 3-methyl-2-oxobutanoate hydroxymethyltransferase, found in Staphylococcus aureus (strain COL).